Here is a 185-residue protein sequence, read N- to C-terminus: MDLLTSSLIGIGLSMDCFAVALAIGTSERLPLVRSALVIAASFGIFQAGMTIAGWIAGASLYTEISSYGSWIAFLLLAGIGIKMIYDGIREEHEPTLSGLHAIPVILLSLATSIDAFAAGVSFGVLGSTVLMPALAIGLVCFVVSCAGVFCGMRLEKLLGNRTEIFGGVILILIGIQILTDILPL.

Helical transmembrane passes span 4–24, 36–56, 65–85, 105–125, 130–150, and 165–185; these read LTSS…ALAI, ALVI…AGWI, ISSY…IKMI, VILL…SFGV, VLMP…AGVF, and IFGG…ILPL.

This sequence belongs to the MntP (TC 9.B.29) family.

The protein localises to the cell membrane. Probably functions as a manganese efflux pump. The polypeptide is Putative manganese efflux pump MntP (Methanoregula boonei (strain DSM 21154 / JCM 14090 / 6A8)).